We begin with the raw amino-acid sequence, 676 residues long: MIDQYKHQQLRIGLVSPQQISAWATKILPNGEIVGEVTKPYTFHYKTNKPEKDGLFCERIFGPIKSGICACGNFRIIGDETEEPKFCEQCAVEFVDSRIRRYQMGYIKLACPVTHVWYLKRLPSYIANFLDKPLKELEGLVYCDFAFARPIAKKPTFLRLRGLFEYEIQSWKYSIPLFFTTQGFDTFRNREISTGASTIREQLADLDLRTILDSSLSEWKEGPTGNEWEDRKVRRRKDFLVRRMELAKHFIRTNIEPEWMVLCLLPVLPPELRPIIQIDGGKLMSSDINELYRRVIYRNNTLTDLLTTSRSTPGELVMCQEKLVQEAVDTLLDNGIRGQPMRDGHNKVYKSFSDVIEGKEGRFRETLLGKRVDYSGRSVIVVGPSLSLHRCGLPREIAIELFQTFVIRGLIRQDLASNIGVAKSKIRENEPIVWEILQEVMRGHPVLLNRAPTLHRLGIQAFQPTLVEGRAICLHPLVCKGFNADFDGDQMAVHVPLSLEAQAEARLLMFSHMNLLSPAIGDPISVPTQDMLIGLYVLTSGNRRGICANRYNPWSRKNYKNEKWNDHNYKYMKEPFFCNSYDAIGAYRQKRINLDSPLWLRWQLDHRVVASREAPIEVHYESLGTYHEIYGNYLIVRSVKKEIIFIYIRTTVGHISFYREIEEAIQGFYRACSYGT.

C69, C71, C87, and C90 together coordinate Zn(2+). Residues D485, D487, and D489 each contribute to the Mg(2+) site.

This sequence belongs to the RNA polymerase beta' chain family. RpoC1 subfamily. As to quaternary structure, in plastids the minimal PEP RNA polymerase catalytic core is composed of four subunits: alpha, beta, beta', and beta''. When a (nuclear-encoded) sigma factor is associated with the core the holoenzyme is formed, which can initiate transcription. Requires Mg(2+) as cofactor. The cofactor is Zn(2+).

Its subcellular location is the plastid. It localises to the chloroplast. It carries out the reaction RNA(n) + a ribonucleoside 5'-triphosphate = RNA(n+1) + diphosphate. Functionally, DNA-dependent RNA polymerase catalyzes the transcription of DNA into RNA using the four ribonucleoside triphosphates as substrates. This is DNA-directed RNA polymerase subunit beta' from Fagopyrum esculentum subsp. ancestrale (Wild buckwheat).